The chain runs to 112 residues: Tyrosine-protein phosphatase 17 (112 aa).

One can recognise a Tyrosine-protein phosphatase domain in the interval 1-112 (WRMIWEHECC…QPHTAGPIVV (112 aa)). A substrate-binding site is contributed by Asp82.

It belongs to the protein-tyrosine phosphatase family.

The catalysed reaction is O-phospho-L-tyrosyl-[protein] + H2O = L-tyrosyl-[protein] + phosphate. The protein is Tyrosine-protein phosphatase 17 (STY-17) of Styela plicata (Wrinkled sea squirt).